We begin with the raw amino-acid sequence, 410 residues long: Neuroserpin (410 aa).

Positions 1–16 (MYFLGLLSLLVLPSKA) are cleaved as a signal peptide. N-linked (GlcNAc...) asparagine glycans are attached at residues asparagine 157 and asparagine 401.

Belongs to the serpin family. In terms of tissue distribution, detected in embryonic ocular vitreous fluid (at protein level). In the embryo present in retina, brain, cerebellum and spinal cord. In adult, predominantly expressed in the brain.

The protein localises to the secreted. The protein resides in the cytoplasmic vesicle. It localises to the secretory vesicle lumen. It is found in the perikaryon. In terms of biological role, serine protease inhibitor that inhibits plasminogen activators and plasmin but not thrombin. May be involved in the formation or reorganization of synaptic connections as well as for synaptic plasticity in the adult nervous system. May protect neurons from cell damage by tissue-type plasminogen activator. This chain is Neuroserpin (SERPINI1), found in Gallus gallus (Chicken).